A 514-amino-acid chain; its full sequence is 2,3-bisphosphoglycerate-independent phosphoglycerate mutase (514 aa).

Residues Asp-14 and Ser-64 each contribute to the Mn(2+) site. The Phosphoserine intermediate role is filled by Ser-64. Substrate is bound by residues His-125, 155–156 (RD), Arg-187, Arg-193, 263–266 (RADR), and Lys-336. Residues Asp-403, His-407, Asp-444, His-445, and His-463 each coordinate Mn(2+).

This sequence belongs to the BPG-independent phosphoglycerate mutase family. As to quaternary structure, monomer. Mn(2+) is required as a cofactor.

It carries out the reaction (2R)-2-phosphoglycerate = (2R)-3-phosphoglycerate. It functions in the pathway carbohydrate degradation; glycolysis; pyruvate from D-glyceraldehyde 3-phosphate: step 3/5. In terms of biological role, catalyzes the interconversion of 2-phosphoglycerate and 3-phosphoglycerate. This chain is 2,3-bisphosphoglycerate-independent phosphoglycerate mutase, found in Shewanella sediminis (strain HAW-EB3).